Consider the following 433-residue polypeptide: MTESVRLPAASLKPSTVALPGSKSISNRTLLLAALSDNVCEIHSLLKSDDTDRMLEALDKLGVQIEHLAEGRLKVHGTGGRFPNRSADLFLGNAGTAFRPLTAALAVLGGGYHLHGVPRMHERPIGDLVDALRIAGADVEYLGNEHYPPLHIGKRQDCGERVIPIKGNVSSQFLTALLMALPLTGQAFEIRMVGELISKPYIDITLKLMAQFGVQVANEGYRVFKIPADAHYHAPEHLHVEGDASGASYFLAAGLIAATPVRVTGIGANSIQGDVAFARELEKIGADVVWGENFVEVSRPKGRAVQAFDLDANHIPDAAMTLAIVALATRQTCTLRNIGSWRVKETDRIAAMANELRKLGAKVVEEAEAIHITPPETPTPDAVIDTYDDHRMAMCFSLISLLGVPVVINDPKCTHKTFPTYFEVFSSLTETAE.

The 3-phosphoshikimate site is built by Lys-23, Ser-24, and Arg-28. Residue Lys-23 coordinates phosphoenolpyruvate. Phosphoenolpyruvate contacts are provided by Gly-95 and Arg-123. The 3-phosphoshikimate site is built by Ser-170, Ser-171, Gln-172, Ser-198, Asp-317, and Lys-344. Residue Gln-172 coordinates phosphoenolpyruvate. Asp-317 serves as the catalytic Proton acceptor. Positions 348, 391, and 416 each coordinate phosphoenolpyruvate.

The protein belongs to the EPSP synthase family. In terms of assembly, monomer.

The protein localises to the cytoplasm. It catalyses the reaction 3-phosphoshikimate + phosphoenolpyruvate = 5-O-(1-carboxyvinyl)-3-phosphoshikimate + phosphate. Its pathway is metabolic intermediate biosynthesis; chorismate biosynthesis; chorismate from D-erythrose 4-phosphate and phosphoenolpyruvate: step 6/7. Catalyzes the transfer of the enolpyruvyl moiety of phosphoenolpyruvate (PEP) to the 5-hydroxyl of shikimate-3-phosphate (S3P) to produce enolpyruvyl shikimate-3-phosphate and inorganic phosphate. The protein is 3-phosphoshikimate 1-carboxyvinyltransferase of Neisseria gonorrhoeae (strain NCCP11945).